Reading from the N-terminus, the 379-residue chain is Succinyl-diaminopimelate desuccinylase (379 aa).

His-70 contributes to the Zn(2+) binding site. Residue Asp-72 is part of the active site. Position 103 (Asp-103) interacts with Zn(2+). The active-site Proton acceptor is the Glu-137. Zn(2+) contacts are provided by Glu-138, Glu-166, and His-352.

Belongs to the peptidase M20A family. DapE subfamily. Homodimer. Zn(2+) is required as a cofactor. The cofactor is Co(2+).

It catalyses the reaction N-succinyl-(2S,6S)-2,6-diaminopimelate + H2O = (2S,6S)-2,6-diaminopimelate + succinate. It functions in the pathway amino-acid biosynthesis; L-lysine biosynthesis via DAP pathway; LL-2,6-diaminopimelate from (S)-tetrahydrodipicolinate (succinylase route): step 3/3. Catalyzes the hydrolysis of N-succinyl-L,L-diaminopimelic acid (SDAP), forming succinate and LL-2,6-diaminopimelate (DAP), an intermediate involved in the bacterial biosynthesis of lysine and meso-diaminopimelic acid, an essential component of bacterial cell walls. The sequence is that of Succinyl-diaminopimelate desuccinylase from Burkholderia mallei (strain NCTC 10247).